Consider the following 587-residue polypeptide: Cyclic di-GMP phosphodiesterase PA2567 (587 aa).

Residues 28-157 form the GAF domain; that stretch reads DEVFEEILAA…LEHFARLVMA (130 aa). The GGDEF domain maps to 192 to 327; the sequence is GALTVIAADL…GVGWARYNPP (136 aa). In terms of domain architecture, EAL spans 335–587; the sequence is AFTLLTSLSQ…PEQLEDWLRR (253 aa).

It catalyses the reaction 3',3'-c-di-GMP + H2O = 5'-phosphoguanylyl(3'-&gt;5')guanosine + H(+). In terms of biological role, phosphodiesterase (PDE) that catalyzes the hydrolysis of cyclic diguanylate (c-di-GMP) to 5'-pGpG. The protein is Cyclic di-GMP phosphodiesterase PA2567 of Pseudomonas aeruginosa (strain ATCC 15692 / DSM 22644 / CIP 104116 / JCM 14847 / LMG 12228 / 1C / PRS 101 / PAO1).